The following is a 111-amino-acid chain: Cell cycle protein GpsB (111 aa).

Positions I38 to V72 form a coiled coil.

Belongs to the GpsB family. Forms polymers through the coiled coil domains. Interacts with PBP1, MreC and EzrA.

It localises to the cytoplasm. Functionally, divisome component that associates with the complex late in its assembly, after the Z-ring is formed, and is dependent on DivIC and PBP2B for its recruitment to the divisome. Together with EzrA, is a key component of the system that regulates PBP1 localization during cell cycle progression. Its main role could be the removal of PBP1 from the cell pole after pole maturation is completed. Also contributes to the recruitment of PBP1 to the division complex. Not essential for septum formation. In Bacillus cereus (strain G9842), this protein is Cell cycle protein GpsB.